Consider the following 489-residue polypeptide: 3-octaprenyl-4-hydroxybenzoate carboxy-lyase (489 aa).

Mn(2+) is bound at residue asparagine 172. Residues 175–177 (IYR), 189–191 (RWL), and 194–195 (RG) each bind prenylated FMN. Position 238 (glutamate 238) interacts with Mn(2+). Aspartate 287 serves as the catalytic Proton donor.

The protein belongs to the UbiD family. Homohexamer. Prenylated FMN is required as a cofactor. Requires Mn(2+) as cofactor.

The protein resides in the cell membrane. The catalysed reaction is a 4-hydroxy-3-(all-trans-polyprenyl)benzoate + H(+) = a 2-(all-trans-polyprenyl)phenol + CO2. It participates in cofactor biosynthesis; ubiquinone biosynthesis. Its function is as follows. Catalyzes the decarboxylation of 3-octaprenyl-4-hydroxy benzoate to 2-octaprenylphenol, an intermediate step in ubiquinone biosynthesis. The protein is 3-octaprenyl-4-hydroxybenzoate carboxy-lyase of Salmonella arizonae (strain ATCC BAA-731 / CDC346-86 / RSK2980).